The primary structure comprises 421 residues: 3-phosphoshikimate 1-carboxyvinyltransferase (421 aa).

Residues Lys-20, Ser-21, and Arg-25 each coordinate 3-phosphoshikimate. Lys-20 contacts phosphoenolpyruvate. Positions 90 and 117 each coordinate phosphoenolpyruvate. The 3-phosphoshikimate site is built by Ser-162, Ser-163, Gln-164, Ser-190, Asp-304, and Lys-331. Gln-164 serves as a coordination point for phosphoenolpyruvate. Residue Asp-304 is the Proton acceptor of the active site. Phosphoenolpyruvate is bound by residues Arg-335 and Arg-376.

The protein belongs to the EPSP synthase family. As to quaternary structure, monomer.

It is found in the cytoplasm. The catalysed reaction is 3-phosphoshikimate + phosphoenolpyruvate = 5-O-(1-carboxyvinyl)-3-phosphoshikimate + phosphate. It participates in metabolic intermediate biosynthesis; chorismate biosynthesis. In terms of biological role, catalyzes the transfer of the enolpyruvyl moiety of phosphoenolpyruvate (PEP) to the 5-hydroxyl of shikimate-3-phosphate (S3P) to produce enolpyruvyl shikimate-3-phosphate and inorganic phosphate. This is 3-phosphoshikimate 1-carboxyvinyltransferase from Methanothrix thermoacetophila (strain DSM 6194 / JCM 14653 / NBRC 101360 / PT) (Methanosaeta thermophila).